The following is a 97-amino-acid chain: UPF0125 protein plu3376 (97 aa).

The protein belongs to the UPF0125 (RnfH) family.

The protein is UPF0125 protein plu3376 of Photorhabdus laumondii subsp. laumondii (strain DSM 15139 / CIP 105565 / TT01) (Photorhabdus luminescens subsp. laumondii).